A 542-amino-acid chain; its full sequence is CTP synthase (542 aa).

The segment at methionine 1 to leucine 265 is amidoligase domain. Serine 13 contacts CTP. Serine 13 is a binding site for UTP. ATP contacts are provided by residues serine 14 to isoleucine 19 and aspartate 71. Residues aspartate 71 and glutamate 139 each contribute to the Mg(2+) site. Residues aspartate 146–glutamate 148, lysine 186–glutamine 191, and lysine 222 each bind CTP. Residues lysine 186–glutamine 191 and lysine 222 each bind UTP. The 252-residue stretch at threonine 290–glycine 541 folds into the Glutamine amidotransferase type-1 domain. L-glutamine is bound at residue glycine 351. Cysteine 378 acts as the Nucleophile; for glutamine hydrolysis in catalysis. L-glutamine is bound by residues leucine 379–glutamine 382, glutamate 402, and arginine 469. Active-site residues include histidine 514 and glutamate 516.

This sequence belongs to the CTP synthase family. Homotetramer.

The enzyme catalyses UTP + L-glutamine + ATP + H2O = CTP + L-glutamate + ADP + phosphate + 2 H(+). The catalysed reaction is L-glutamine + H2O = L-glutamate + NH4(+). It carries out the reaction UTP + NH4(+) + ATP = CTP + ADP + phosphate + 2 H(+). It participates in pyrimidine metabolism; CTP biosynthesis via de novo pathway; CTP from UDP: step 2/2. Its activity is regulated as follows. Allosterically activated by GTP, when glutamine is the substrate; GTP has no effect on the reaction when ammonia is the substrate. The allosteric effector GTP functions by stabilizing the protein conformation that binds the tetrahedral intermediate(s) formed during glutamine hydrolysis. Inhibited by the product CTP, via allosteric rather than competitive inhibition. Its function is as follows. Catalyzes the ATP-dependent amination of UTP to CTP with either L-glutamine or ammonia as the source of nitrogen. Regulates intracellular CTP levels through interactions with the four ribonucleotide triphosphates. In Hahella chejuensis (strain KCTC 2396), this protein is CTP synthase.